A 328-amino-acid chain; its full sequence is D-cysteine desulfhydrase (328 aa).

At Lys-51 the chain carries N6-(pyridoxal phosphate)lysine.

It belongs to the ACC deaminase/D-cysteine desulfhydrase family. As to quaternary structure, homodimer. Pyridoxal 5'-phosphate serves as cofactor.

The catalysed reaction is D-cysteine + H2O = hydrogen sulfide + pyruvate + NH4(+) + H(+). In terms of biological role, catalyzes the alpha,beta-elimination reaction of D-cysteine and of several D-cysteine derivatives. It could be a defense mechanism against D-cysteine. This is D-cysteine desulfhydrase from Salmonella paratyphi B (strain ATCC BAA-1250 / SPB7).